Reading from the N-terminus, the 185-residue chain is uncharacterized protein (185 aa).

The protein belongs to the EUO family.

This is an uncharacterized protein from Chlamydia muridarum (strain MoPn / Nigg).